A 356-amino-acid chain; its full sequence is UDP-N-acetylglucosamine--N-acetylmuramyl-(pentapeptide) pyrophosphoryl-undecaprenol N-acetylglucosamine transferase (356 aa).

Residues Arg166, Ser196, and Gln290 each contribute to the UDP-N-acetyl-alpha-D-glucosamine site.

The protein belongs to the glycosyltransferase 28 family. MurG subfamily.

Its subcellular location is the cell membrane. The catalysed reaction is Mur2Ac(oyl-L-Ala-gamma-D-Glu-L-Lys-D-Ala-D-Ala)-di-trans,octa-cis-undecaprenyl diphosphate + UDP-N-acetyl-alpha-D-glucosamine = beta-D-GlcNAc-(1-&gt;4)-Mur2Ac(oyl-L-Ala-gamma-D-Glu-L-Lys-D-Ala-D-Ala)-di-trans,octa-cis-undecaprenyl diphosphate + UDP + H(+). It functions in the pathway cell wall biogenesis; peptidoglycan biosynthesis. Functionally, cell wall formation. Catalyzes the transfer of a GlcNAc subunit on undecaprenyl-pyrophosphoryl-MurNAc-pentapeptide (lipid intermediate I) to form undecaprenyl-pyrophosphoryl-MurNAc-(pentapeptide)GlcNAc (lipid intermediate II). This chain is UDP-N-acetylglucosamine--N-acetylmuramyl-(pentapeptide) pyrophosphoryl-undecaprenol N-acetylglucosamine transferase, found in Staphylococcus aureus (strain bovine RF122 / ET3-1).